Reading from the N-terminus, the 332-residue chain is MDQNGHNDEAETVSCGNGNCKSKIVPGDDHGGDESSGTKRRKKRKTQQKTMKRRELMSYCELPEYMKDNEYILNYYRADWSIRDAFFSVFSFHNESLNVWTHLIGFIFFVALTVANIIHHDGFFPVDAKSPGNVTRWPFFVFLGGSMFCLLASSICHLFCCHSKELNVFLLRIDYAGITAMIITSFFPPIFYIFQCTPRWYFIYLAGITSMGIFTIITLFTPSLSAPKYRAFRALLFASMGLFGIVPAAHALVVNWGNPQRNVTLVYELLMAVFYLVGTGFYVGRVPERLKPGWFDRVGHSHQIFHVFVLLGALSHYAAALLFLDWRDHVGC.

Residues Met1–Lys52 are disordered. Over Met1 to Asn98 the chain is Cytoplasmic. The segment covering Pro26–Gly37 has biased composition (basic and acidic residues). The segment covering Thr38–Lys52 has biased composition (basic residues). The chain crosses the membrane as a helical span at residues Val99–His119. The Extracellular segment spans residues His120 to Pro138. Residues Phe139 to Phe159 form a helical membrane-spanning segment. Over Cys160–Arg172 the chain is Cytoplasmic. Residues Ile173–Ile193 form a helical membrane-spanning segment. Residues Phe194–Arg199 lie on the Extracellular side of the membrane. A helical transmembrane segment spans residues Trp200–Phe220. Residues Thr221 to Arg233 are Cytoplasmic-facing. Residues Ala234–Val254 form a helical membrane-spanning segment. Topologically, residues Asn255–Asn262 are extracellular. The chain crosses the membrane as a helical span at residues Val263 to Val283. Residues Gly284–Gln303 are Cytoplasmic-facing. The chain crosses the membrane as a helical span at residues Ile304 to Leu324. The Extracellular portion of the chain corresponds to Asp325–Cys332.

Belongs to the ADIPOR family. In terms of assembly, interacts (via N-terminus) with SCRM/ICE1. In terms of tissue distribution, expressed in roots, hypocotyls, vasculature of cotyledons and leaves, hydathodes and guard cells. In reproductive organs, expressed in trichomes, veins of sepals, stamens and stigmata of pistils.

Its subcellular location is the membrane. May act as a negative regulator of abscisic acid (ABA)-mediated osmotic stress signaling and function in cross-talk between cold and osmotic signaling. The sequence is that of Heptahelical transmembrane protein 1 (HHP1) from Arabidopsis thaliana (Mouse-ear cress).